The chain runs to 194 residues: Orotate phosphoribosyltransferase (194 aa).

Residue 116 to 124 (EDIVTTGLS) participates in 5-phospho-alpha-D-ribose 1-diphosphate binding. Residues Thr-120 and Arg-148 each coordinate orotate.

Belongs to the purine/pyrimidine phosphoribosyltransferase family. PyrE subfamily. Homodimer. Mg(2+) serves as cofactor.

The enzyme catalyses orotidine 5'-phosphate + diphosphate = orotate + 5-phospho-alpha-D-ribose 1-diphosphate. The protein operates within pyrimidine metabolism; UMP biosynthesis via de novo pathway; UMP from orotate: step 1/2. In terms of biological role, catalyzes the transfer of a ribosyl phosphate group from 5-phosphoribose 1-diphosphate to orotate, leading to the formation of orotidine monophosphate (OMP). The protein is Orotate phosphoribosyltransferase of Caulobacter vibrioides (strain ATCC 19089 / CIP 103742 / CB 15) (Caulobacter crescentus).